The chain runs to 185 residues: Ribosome-recycling factor (185 aa).

It belongs to the RRF family.

It is found in the cytoplasm. In terms of biological role, responsible for the release of ribosomes from messenger RNA at the termination of protein biosynthesis. May increase the efficiency of translation by recycling ribosomes from one round of translation to another. This chain is Ribosome-recycling factor, found in Shewanella denitrificans (strain OS217 / ATCC BAA-1090 / DSM 15013).